A 145-amino-acid polypeptide reads, in one-letter code: Antiholin-like protein LrgA (145 aa).

The next 4 membrane-spanning stretches (helical) occupy residues 10 to 30 (PAHFFHQVIVIALVLFVSKII), 33 to 53 (FMPIPMPASVIGLVLLFVLLC), 72 to 92 (NIGLLFVPAGISVVNSLGVIS), and 96 to 116 (FLIIGLIIVSTILLLICTGYV).

This sequence belongs to the CidA/LrgA family. LrgA subfamily.

Its subcellular location is the cell membrane. In terms of biological role, inhibits the expression or activity of extracellular murein hydrolases by interacting, possibly with LrgB, with the holin-like proteins CidA and/or CidB. The LrgAB and CidAB proteins may affect the proton motive force of the membrane. May be involved in programmed cell death (PCD), possibly triggering PCD in response to antibiotics and environmental stresses. The sequence is that of Antiholin-like protein LrgA from Staphylococcus aureus (strain JH1).